A 302-amino-acid polypeptide reads, in one-letter code: uncharacterized protein (302 aa).

The signal sequence occupies residues 1–52 (MLKKLKVVRLLVNHLIYCPSIFMPYSKNMKKKIWNKTSLGALFMLFGTALTA).

The protein belongs to the MG439/MG440 family.

This is an uncharacterized protein from Mycoplasma pneumoniae (strain ATCC 29342 / M129 / Subtype 1) (Mycoplasmoides pneumoniae).